Consider the following 58-residue polypeptide: Small ribosomal subunit protein bS21C (58 aa).

A disordered region spans residues 38-58 (YEKPSLRRKRKAEAARKGGRY). Residues 49-58 (AEAARKGGRY) show a composition bias toward basic and acidic residues.

It belongs to the bacterial ribosomal protein bS21 family.

This is Small ribosomal subunit protein bS21C (rpsU3) from Nostoc sp. (strain PCC 7120 / SAG 25.82 / UTEX 2576).